A 129-amino-acid chain; its full sequence is Small ribosomal subunit protein uS13 (129 aa).

Residues 92-114 are compositionally biased toward basic residues; it reads HKHNLPVRGQRTKTNARTRRGPR. The tract at residues 92-129 is disordered; the sequence is HKHNLPVRGQRTKTNARTRRGPRKTVAGRGQKRGATKK.

It belongs to the universal ribosomal protein uS13 family. Part of the 30S ribosomal subunit. Forms a loose heterodimer with protein S19. Forms two bridges to the 50S subunit in the 70S ribosome.

Its function is as follows. Located at the top of the head of the 30S subunit, it contacts several helices of the 16S rRNA. In the 70S ribosome it contacts the 23S rRNA (bridge B1a) and protein L5 of the 50S subunit (bridge B1b), connecting the 2 subunits; these bridges are implicated in subunit movement. Contacts the tRNAs in the A and P-sites. The protein is Small ribosomal subunit protein uS13 of Dehalococcoides mccartyi (strain ATCC BAA-2266 / KCTC 15142 / 195) (Dehalococcoides ethenogenes (strain 195)).